Consider the following 157-residue polypeptide: Class I hydrophobin rodA (157 aa).

Positions 1–41 (MKFSIAAAVVAFAASVAALPPAHDSQFAGNGVGNKGNSNVK) are cleaved as a signal peptide. Asparagine 47 is a glycosylation site (N-linked (GlcNAc...) asparagine). 4 disulfide bridges follow: cysteine 57/cysteine 131, cysteine 65/cysteine 125, cysteine 66/cysteine 106, and cysteine 132/cysteine 150.

The protein belongs to the fungal hydrophobin family. In terms of assembly, self-assembles to form functional amyloid fibrils called rodlets. Self-assembly into fibrillar rodlets occurs spontaneously at hydrophobic:hydrophilic interfaces and the rodlets further associate laterally to form amphipathic monolayers.

Its subcellular location is the secreted. The protein localises to the spore wall. Aerial growth, conidiation, and dispersal of filamentous fungi in the environment rely upon a capability of their secreting small amphipathic proteins called hydrophobins (HPBs) with low sequence identity. Class I can self-assemble into an outermost layer of rodlet bundles on aerial cell surfaces, conferring cellular hydrophobicity that supports fungal growth, development and dispersal; whereas Class II form highly ordered films at water-air interfaces through intermolecular interactions but contribute nothing to the rodlet structure. RodA is a class I hydrophobin that contributes to surface hydrophobicity, which is important for processes such as association of hyphae in reproductive structures, dispersal of aerial spores and adhesion of pathogens to host structures. Important for the formation of hydrophobic rodlet layers of asexually-produced spores. Promotes also biofilm formation and may enhance lignocellulose utilization via promoting a compact substrate-enzyme-fungus structure. This chain is Class I hydrophobin rodA, found in Emericella nidulans (strain FGSC A4 / ATCC 38163 / CBS 112.46 / NRRL 194 / M139) (Aspergillus nidulans).